The chain runs to 303 residues: Methionyl-tRNA formyltransferase (303 aa).

(6S)-5,6,7,8-tetrahydrofolate is bound at residue 110–113; sequence SLLP.

It belongs to the Fmt family.

The catalysed reaction is L-methionyl-tRNA(fMet) + (6R)-10-formyltetrahydrofolate = N-formyl-L-methionyl-tRNA(fMet) + (6S)-5,6,7,8-tetrahydrofolate + H(+). Its function is as follows. Attaches a formyl group to the free amino group of methionyl-tRNA(fMet). The formyl group appears to play a dual role in the initiator identity of N-formylmethionyl-tRNA by promoting its recognition by IF2 and preventing the misappropriation of this tRNA by the elongation apparatus. The protein is Methionyl-tRNA formyltransferase of Ehrlichia ruminantium (strain Gardel).